A 90-amino-acid chain; its full sequence is Small ribosomal subunit protein bS16 (90 aa).

This sequence belongs to the bacterial ribosomal protein bS16 family.

This Moorella thermoacetica (strain ATCC 39073 / JCM 9320) protein is Small ribosomal subunit protein bS16.